The primary structure comprises 379 residues: Anhydro-N-acetylmuramic acid kinase (379 aa).

12 to 19 (GTSLDGMD) lines the ATP pocket.

Belongs to the anhydro-N-acetylmuramic acid kinase family.

The enzyme catalyses 1,6-anhydro-N-acetyl-beta-muramate + ATP + H2O = N-acetyl-D-muramate 6-phosphate + ADP + H(+). The protein operates within amino-sugar metabolism; 1,6-anhydro-N-acetylmuramate degradation. It functions in the pathway cell wall biogenesis; peptidoglycan recycling. In terms of biological role, catalyzes the specific phosphorylation of 1,6-anhydro-N-acetylmuramic acid (anhMurNAc) with the simultaneous cleavage of the 1,6-anhydro ring, generating MurNAc-6-P. Is required for the utilization of anhMurNAc either imported from the medium or derived from its own cell wall murein, and thus plays a role in cell wall recycling. The sequence is that of Anhydro-N-acetylmuramic acid kinase from Gloeobacter violaceus (strain ATCC 29082 / PCC 7421).